The following is a 224-amino-acid chain: MRLVIAQCTVDYVGRLTAHLPSARRLLLFKADGSVSVHADDRAYKPLNWMSPPCWVTEQDTETGVALWVVENKTGEQLRITVEDIEHDSHHELGVDPGLVKDGVEAHLQALLAEHVELLGAGYTLVRREYPTPIGPVDLLCRDELGRSVAVEIKRRGEIDGVEQLTRYLELLNRDSLLAPVAGVFAAQQIKPQARTLATDRGIRCVTLDYDQMRGMDSDEYRLF.

Belongs to the NucS endonuclease family.

It localises to the cytoplasm. Cleaves both 3' and 5' ssDNA extremities of branched DNA structures. In Mycolicibacterium smegmatis (strain ATCC 700084 / mc(2)155) (Mycobacterium smegmatis), this protein is Endonuclease NucS.